Reading from the N-terminus, the 79-residue chain is Sec-independent protein translocase protein TatA (79 aa).

A helical transmembrane segment spans residues 1–21; it reads MGSLSIWHWIVVIAVILLLFG. Residues 43 to 60 show a composition bias toward basic and acidic residues; sequence MQDDEKTAEKPEPVKTID. A disordered region spans residues 43 to 79; sequence MQDDEKTAEKPEPVKTIDHNAPAPGASRSDVGSKTTV.

Belongs to the TatA/E family. In terms of assembly, the Tat system comprises two distinct complexes: a TatABC complex, containing multiple copies of TatA, TatB and TatC subunits, and a separate TatA complex, containing only TatA subunits. Substrates initially bind to the TatABC complex, which probably triggers association of the separate TatA complex to form the active translocon.

The protein localises to the cell inner membrane. In terms of biological role, part of the twin-arginine translocation (Tat) system that transports large folded proteins containing a characteristic twin-arginine motif in their signal peptide across membranes. TatA could form the protein-conducting channel of the Tat system. In Nitrobacter hamburgensis (strain DSM 10229 / NCIMB 13809 / X14), this protein is Sec-independent protein translocase protein TatA.